We begin with the raw amino-acid sequence, 497 residues long: tRNA-2-methylthio-N(6)-dimethylallyladenosine synthase (497 aa).

Residues 1–10 are compositionally biased toward basic and acidic residues; that stretch reads MTLLDSDSRQ. The segment at 1-26 is disordered; sequence MTLLDSDSRQSAEVLPAAGPAPDRPR. One can recognise an MTTase N-terminal domain in the interval 26–142; the sequence is RTYQVRTFGC…LPVLLERARI (117 aa). Positions 35, 71, 105, 179, 183, and 186 each coordinate [4Fe-4S] cluster. A Radical SAM core domain is found at 165–395; sequence RESVYAAWVA…VALVEQIALE (231 aa). The region spanning 398 to 464 is the TRAM domain; the sequence is QAQVGRVVEV…PHCLIADQVL (67 aa).

It belongs to the methylthiotransferase family. MiaB subfamily. As to quaternary structure, monomer. [4Fe-4S] cluster serves as cofactor.

It is found in the cytoplasm. The enzyme catalyses N(6)-dimethylallyladenosine(37) in tRNA + (sulfur carrier)-SH + AH2 + 2 S-adenosyl-L-methionine = 2-methylsulfanyl-N(6)-dimethylallyladenosine(37) in tRNA + (sulfur carrier)-H + 5'-deoxyadenosine + L-methionine + A + S-adenosyl-L-homocysteine + 2 H(+). In terms of biological role, catalyzes the methylthiolation of N6-(dimethylallyl)adenosine (i(6)A), leading to the formation of 2-methylthio-N6-(dimethylallyl)adenosine (ms(2)i(6)A) at position 37 in tRNAs that read codons beginning with uridine. This Acidothermus cellulolyticus (strain ATCC 43068 / DSM 8971 / 11B) protein is tRNA-2-methylthio-N(6)-dimethylallyladenosine synthase.